The chain runs to 83 residues: Kunitz-type serine protease inhibitor superbin-2 (83 aa).

The N-terminal stretch at 1–24 is a signal peptide; sequence MSSGGLLLLLGLLTLWEVLTPISS. The BPTI/Kunitz inhibitor domain maps to 31–81; the sequence is CELPADTGPCKAIFQAFYYHPVHRTCLKFIYGGCEGNANNFKTIDECKRTC. Disulfide bonds link cysteine 31/cysteine 81, cysteine 40/cysteine 64, and cysteine 56/cysteine 77.

Belongs to the venom Kunitz-type family. In terms of tissue distribution, expressed by the venom gland.

It is found in the secreted. In terms of biological role, serine protease inhibitor. This Austrelaps superbus (Lowland copperhead snake) protein is Kunitz-type serine protease inhibitor superbin-2.